The following is a 528-amino-acid chain: Sphingosine-1-phosphate lyase (528 aa).

Residues 13–35 (PAKLVLATAGITAASILAYQAIT) form a helical membrane-spanning segment. Lys-324 is modified (N6-(pyridoxal phosphate)lysine).

The protein belongs to the group II decarboxylase family. Sphingosine-1-phosphate lyase subfamily. Pyridoxal 5'-phosphate is required as a cofactor.

It is found in the endoplasmic reticulum membrane. It carries out the reaction sphinganine 1-phosphate = hexadecanal + phosphoethanolamine. It functions in the pathway lipid metabolism; sphingolipid metabolism. Cleaves phosphorylated sphingoid bases (PSBs), such as sphingosine-1-phosphate, into fatty aldehydes and phosphoethanolamine. Sphingosine-1-phosphate (S1P) probably acts intracellularly as a second messenger perhaps by promoting cell proliferation; the absence of S1P lyase increases its concentration. This leads to increased lateral pseudopod formation as well as defects in the efficiency of chemotaxis. Overexpression of S1P lyase causes decreased growth rates, entry into stationary phase at lower cell density and increased sensitivity to the antitumor agents cisplatin and carboplatin; these effects are more pronounced in cells that express more enzyme. The polypeptide is Sphingosine-1-phosphate lyase (sglA) (Dictyostelium discoideum (Social amoeba)).